A 300-amino-acid polypeptide reads, in one-letter code: 7-methylguanosine phosphate-specific 5'-nucleotidase (300 aa).

Asp41 acts as the Nucleophile in catalysis. 2 residues coordinate Mg(2+): Asp41 and Asp43. Asp43 acts as the Proton donor in catalysis. A CMP-binding site is contributed by Glu88. Residue Glu88 coordinates N(7)-methyl-GMP. Residues 156–157 (SA) and Lys205 each bind substrate. Residue Asp230 coordinates Mg(2+). Lys256 is subject to N6-acetyllysine.

The protein belongs to the pyrimidine 5'-nucleotidase family. In terms of assembly, monomer.

The protein localises to the cytoplasm. The catalysed reaction is N(7)-methyl-GMP + H2O = N(7)-methylguanosine + phosphate. The enzyme catalyses CMP + H2O = cytidine + phosphate. It carries out the reaction a ribonucleoside 5'-phosphate + H2O = a ribonucleoside + phosphate. In terms of biological role, specifically hydrolyzes 7-methylguanosine monophosphate (m(7)GMP) to 7-methylguanosine and inorganic phosphate. The specific activity for m(7)GMP may protect cells against undesired salvage of m(7)GMP and its incorporation into nucleic acids. Also has weak activity for CMP. UMP and purine nucleotides are poor substrates. This Homo sapiens (Human) protein is 7-methylguanosine phosphate-specific 5'-nucleotidase (NT5C3B).